Consider the following 374-residue polypeptide: Alcohol dehydrogenase class-3 (374 aa).

Residue S2 is modified to N-acetylserine. Zn(2+)-binding residues include C45, H67, C97, C100, C103, C111, and C174. The residue at position 233 (K233) is an N6-succinyllysine. S247 carries the post-translational modification Phosphoserine. K315 is modified (N6-succinyllysine). 2 positions are modified to phosphoserine: S324 and S351.

It belongs to the zinc-containing alcohol dehydrogenase family. Class-III subfamily. Homodimer. Zn(2+) serves as cofactor.

It localises to the cytoplasm. It catalyses the reaction a primary alcohol + NAD(+) = an aldehyde + NADH + H(+). The catalysed reaction is a secondary alcohol + NAD(+) = a ketone + NADH + H(+). It carries out the reaction S-(hydroxymethyl)glutathione + NADP(+) = S-formylglutathione + NADPH + H(+). The enzyme catalyses S-(hydroxymethyl)glutathione + NAD(+) = S-formylglutathione + NADH + H(+). It catalyses the reaction 20-oxo-(5Z,8Z,11Z,14Z)-eicosatetraenoate + NAD(+) + H2O = (5Z,8Z,11Z,14Z)-eicosatetraenedioate + NADH + 2 H(+). The catalysed reaction is 20-hydroxy-(5Z,8Z,11Z,14Z)-eicosatetraenoate + NAD(+) = 20-oxo-(5Z,8Z,11Z,14Z)-eicosatetraenoate + NADH + H(+). It carries out the reaction S-nitrosoglutathione + NADH + H(+) = S-(hydroxysulfenamide)glutathione + NAD(+). Functionally, catalyzes the oxidation of long-chain primary alcohols and the oxidation of S-(hydroxymethyl) glutathione. Also oxidizes long chain omega-hydroxy fatty acids, such as 20-HETE, producing both the intermediate aldehyde, 20-oxoarachidonate and the end product, a dicarboxylic acid, (5Z,8Z,11Z,14Z)-eicosatetraenedioate. Class-III ADH is remarkably ineffective in oxidizing ethanol. Required for clearance of cellular formaldehyde, a cytotoxic and carcinogenic metabolite that induces DNA damage. Also acts as a S-nitroso-glutathione reductase by catalyzing the NADH-dependent reduction of S-nitrosoglutathione, thereby regulating protein S-nitrosylation. The polypeptide is Alcohol dehydrogenase class-3 (Equus caballus (Horse)).